Consider the following 307-residue polypeptide: Ribonuclease Z (307 aa).

Zn(2+) contacts are provided by H63, H65, D67, H68, H143, D213, and H271. Residue D67 is the Proton acceptor of the active site.

Belongs to the RNase Z family. As to quaternary structure, homodimer. Zn(2+) is required as a cofactor.

The enzyme catalyses Endonucleolytic cleavage of RNA, removing extra 3' nucleotides from tRNA precursor, generating 3' termini of tRNAs. A 3'-hydroxy group is left at the tRNA terminus and a 5'-phosphoryl group is left at the trailer molecule.. In terms of biological role, zinc phosphodiesterase, which displays some tRNA 3'-processing endonuclease activity. Probably involved in tRNA maturation, by removing a 3'-trailer from precursor tRNA. This is Ribonuclease Z from Lactococcus lactis subsp. cremoris (strain SK11).